The primary structure comprises 139 residues: Large ribosomal subunit protein uL16 (139 aa).

The protein belongs to the universal ribosomal protein uL16 family. As to quaternary structure, part of the 50S ribosomal subunit.

Its function is as follows. Binds 23S rRNA and is also seen to make contacts with the A and possibly P site tRNAs. In Picosynechococcus sp. (strain ATCC 27264 / PCC 7002 / PR-6) (Agmenellum quadruplicatum), this protein is Large ribosomal subunit protein uL16.